We begin with the raw amino-acid sequence, 398 residues long: Minor cardiolipin synthase ClsB (398 aa).

Residues 3 to 23 (VFIVIMIIVVIFFALILLDIF) traverse the membrane as a helical segment. PLD phosphodiesterase domains are found at residues 141–168 (MQKRNHRKITVIDGKIGYIGGFNIAEEY) and 311–338 (YQGFYHVKALIIDDHLSIIGTANFDKRS).

Belongs to the phospholipase D family. Cardiolipin synthase subfamily.

It localises to the cell membrane. Its function is as follows. Involved in the biosynthesis of cardiolipin. This is Minor cardiolipin synthase ClsB (clsB) from Bacillus subtilis (strain 168).